The primary structure comprises 64 residues: Large ribosomal subunit protein bL35 (64 aa).

The segment at Met1–Ala25 is disordered.

Belongs to the bacterial ribosomal protein bL35 family.

The protein is Large ribosomal subunit protein bL35 of Clostridioides difficile (strain 630) (Peptoclostridium difficile).